Reading from the N-terminus, the 713-residue chain is TWiK family of potassium channels protein 12 (713 aa).

At M1–R15 the chain is on the cytoplasmic side. A helical transmembrane segment spans residues L16–F36. N-linked (GlcNAc...) asparagine glycans are attached at residues N53, N77, and N98. The pore-forming intramembrane region spans W112–Y132. The chain crosses the membrane as a helical span at residues I142–E162. Residues N163–P242 lie on the Cytoplasmic side of the membrane. Residues I243 to I263 traverse the membrane as a helical segment. Positions T267–G287 form an intramembrane region, pore-forming. The helical transmembrane segment at V298–I318 threads the bilayer. Residues T319–A713 lie on the Cytoplasmic side of the membrane.

It belongs to the two pore domain potassium channel (TC 1.A.1.8) family.

The protein resides in the membrane. The sequence is that of TWiK family of potassium channels protein 12 (twk-12) from Caenorhabditis elegans.